The following is a 276-amino-acid chain: Adenylate kinase (276 aa).

50-55 provides a ligand contact to ATP; that stretch reads GAGKGT. Residues 70–99 form an NMP region; the sequence is ATGDMLRSQVAKKTPLGREAKKIMDQGGLV. AMP is bound by residues Thr-71, Arg-76, 97–99, 126–129, and Gln-133; these read GLV and GFPR. The segment at 167 to 204 is LID; sequence GRLVHPASGRSYHTTFNPPKKAMTDDVTGEPLIQRSDD. Residues Arg-168 and 177–178 each bind ATP; that span reads SY. AMP is bound by residues Arg-201 and Arg-212. Residue Gln-240 participates in ATP binding.

Belongs to the adenylate kinase family. AK2 subfamily. As to quaternary structure, monomer.

Its subcellular location is the cytoplasm. It localises to the cytosol. The protein localises to the mitochondrion intermembrane space. The enzyme catalyses AMP + ATP = 2 ADP. Catalyzes the reversible transfer of the terminal phosphate group between ATP and AMP. Plays an important role in cellular energy homeostasis and in adenine nucleotide metabolism. Adenylate kinase activity is critical for regulation of the phosphate utilization and the AMP de novo biosynthesis pathways. The chain is Adenylate kinase from Pyricularia oryzae (strain 70-15 / ATCC MYA-4617 / FGSC 8958) (Rice blast fungus).